Reading from the N-terminus, the 508-residue chain is Photosystem II CP47 reaction center protein (508 aa).

6 helical membrane passes run 21 to 36 (AVHL…WAGS), 101 to 115 (IVLS…VWHW), 140 to 156 (GIHL…FGAF), 203 to 218 (IAAG…FHLT), 237 to 252 (VLSS…AFVV), and 457 to 472 (SFAL…HGSR).

The protein belongs to the PsbB/PsbC family. PsbB subfamily. As to quaternary structure, PSII is composed of 1 copy each of membrane proteins PsbA, PsbB, PsbC, PsbD, PsbE, PsbF, PsbH, PsbI, PsbJ, PsbK, PsbL, PsbM, PsbT, PsbX, PsbY, PsbZ, Psb30/Ycf12, peripheral proteins PsbO, CyanoQ (PsbQ), PsbU, PsbV and a large number of cofactors. It forms dimeric complexes. Requires Binds multiple chlorophylls. PSII binds additional chlorophylls, carotenoids and specific lipids. as cofactor.

The protein localises to the cellular thylakoid membrane. Functionally, one of the components of the core complex of photosystem II (PSII). It binds chlorophyll and helps catalyze the primary light-induced photochemical processes of PSII. PSII is a light-driven water:plastoquinone oxidoreductase, using light energy to abstract electrons from H(2)O, generating O(2) and a proton gradient subsequently used for ATP formation. The polypeptide is Photosystem II CP47 reaction center protein (Synechococcus elongatus (strain ATCC 33912 / PCC 7942 / FACHB-805) (Anacystis nidulans R2)).